Here is an 85-residue protein sequence, read N- to C-terminus: Large ribosomal subunit protein bL27 (85 aa).

The tract at residues 1-22 is disordered; it reads MAHKKGASSTRNGRDSNAQRLG. A compositionally biased stretch (polar residues) spans 7-19; sequence ASSTRNGRDSNAQ.

The protein belongs to the bacterial ribosomal protein bL27 family.

This chain is Large ribosomal subunit protein bL27 (rpmA), found in Streptomyces griseus.